Consider the following 368-residue polypeptide: tRNA-specific 2-thiouridylase MnmA (368 aa).

Residues 12–19 and M38 each bind ATP; that span reads GMSGGVDS. The interval 98-100 is interaction with target base in tRNA; sequence NPD. The Nucleophile role is filled by C103. An intrachain disulfide couples C103 to C200. G128 contributes to the ATP binding site. Residues 150-152 are interaction with tRNA; that stretch reads KDQ. Residue C200 is the Cysteine persulfide intermediate of the active site. The tract at residues 313–314 is interaction with tRNA; it reads RY.

It belongs to the MnmA/TRMU family. In terms of assembly, interacts with TusE.

It localises to the cytoplasm. It carries out the reaction S-sulfanyl-L-cysteinyl-[protein] + uridine(34) in tRNA + AH2 + ATP = 2-thiouridine(34) in tRNA + L-cysteinyl-[protein] + A + AMP + diphosphate + H(+). Functionally, catalyzes the 2-thiolation of uridine at the wobble position (U34) of tRNA(Lys), tRNA(Glu) and tRNA(Gln), leading to the formation of s(2)U34, the first step of tRNA-mnm(5)s(2)U34 synthesis. Sulfur is provided by IscS, via a sulfur-relay system. Binds ATP and its substrate tRNAs. In Pectobacterium carotovorum subsp. carotovorum (strain PC1), this protein is tRNA-specific 2-thiouridylase MnmA.